The following is a 753-amino-acid chain: Pesticidal crystal protein Cry20Aa (753 aa).

Residues 680–696 are compositionally biased toward polar residues; sequence DTTYQPSYDNYNQNASG. The disordered stretch occupies residues 680–721; sequence DTTYQPSYDNYNQNASGTYDDGYNPNASDSYDQSYTNNYSQN. A compositionally biased stretch (low complexity) spans 712 to 721; the sequence is QSYTNNYSQN.

Belongs to the delta endotoxin family. Post-translationally, has low mosquitocidal activity probably due to rapid proteolysis to inactive 56 kDa and 43 kDa proteins.

In terms of biological role, promotes colloidosmotic lysis by binding to the midgut epithelial cells of mosquitos. Active against Aedes aegypti and Culex quinquefasciatus larvae. The chain is Pesticidal crystal protein Cry20Aa (cry20Aa) from Bacillus thuringiensis subsp. fukuokaensis.